The following is a 663-amino-acid chain: Protein THEMIS2 (663 aa).

2 CABIT regions span residues glutamate 2–serine 237 and glutamine 238–glycine 515. The interval alanine 545–isoleucine 663 is disordered. Positions glutamine 559–lysine 577 are enriched in polar residues. Threonine 596 is modified (phosphothreonine). The segment covering asparagine 621 to lysine 641 has biased composition (polar residues). The segment covering proline 653 to isoleucine 663 has biased composition (acidic residues). Tyrosine 660 bears the Phosphotyrosine mark.

This sequence belongs to the themis family. As to quaternary structure, interacts with VAV1. Interacts with LAT. Interacts constitutively with GRB2, LYN and PLCG2; these interactions increase the activation of PLCG2 and its downstream pathways following B cell receptor stimulation. Phosphorylation at Tyr-660 is induced by LPS. Phosphorylated by Src kinases (Lck or Fyn) following BCR engagement. As to expression, expressed in both developing and mature B-cells with high expression in immature, follicular and B1 B cells. Also expressed in macrophages and dendritic cells. Down-regulated in splenocytes of mice developing arthritis in a collagen-induced model, not in those of mice failing to develop the disease. Transiently down-regulated in splenocytes of mice infected with influenza virus.

It is found in the nucleus. The protein localises to the cytoplasm. Its function is as follows. May constitute a control point in macrophage inflammatory response, promoting LPS-induced TLR4-mediated TNF production. Determines the threshold for activation of B cells by low-affinity and low-avidity ligands via PLCG2 activation and its downstream pathways. This chain is Protein THEMIS2, found in Mus musculus (Mouse).